A 983-amino-acid polypeptide reads, in one-letter code: Chaperone protein ClpB3, mitochondrial (983 aa).

A mitochondrion-targeting transit peptide spans 1–87; sequence MSRATAVSRL…LFHPTQAARY (87 aa). Residues 97–240 enclose the Clp R domain; sequence PGEFTEMAWE…KEAISAVRGS (144 aa). Repeat regions lie at residues 100–165 and 177–240; these read FTEM…ISRQ and IGSS…VRGS. Residues 255 to 503 are i; it reads LEKYGIDMTE…KLKMEITSKP (249 aa). An ATP-binding site is contributed by 300–307; sequence GEPGVGKT. Residues 504–627 are a coiled coil; it reads IELDEVDREI…QQSGKSMLRE (124 aa). The segment at 629-820 is II; it reads VTDVDIAEIV…VIIMTSNIGS (192 aa). 703–710 is a binding site for ATP; the sequence is GPTGVGKT.

The protein belongs to the ClpA/ClpB family.

It is found in the mitochondrion. Its function is as follows. Molecular chaperone that may not be involved in heat stress response or tolerance. The protein is Chaperone protein ClpB3, mitochondrial (CLPB3) of Oryza sativa subsp. japonica (Rice).